A 5193-amino-acid polypeptide reads, in one-letter code: Usherin (5193 aa).

Residues 1–34 (MHYLALSPGFLCYTIKTLILAYLASVLVLAASQG) form the signal peptide. At 35–5033 (VFPRLENVGA…KSTEFYSELW (4999 aa)) the chain is on the extracellular side. 7 N-linked (GlcNAc...) asparagine glycosylation sites follow: asparagine 230, asparagine 258, asparagine 274, asparagine 358, asparagine 415, asparagine 448, and asparagine 469. In terms of domain architecture, Laminin N-terminal spans 268–514 (QDFRLYNVSL…AVDEIIVSGR (247 aa)). 24 cysteine pairs are disulfide-bonded: cysteine 515/cysteine 524, cysteine 517/cysteine 533, cysteine 535/cysteine 546, cysteine 549/cysteine 569, cysteine 572/cysteine 581, cysteine 574/cysteine 602, cysteine 605/cysteine 614, cysteine 617/cysteine 635, cysteine 638/cysteine 652, cysteine 640/cysteine 659, cysteine 661/cysteine 670, cysteine 673/cysteine 688, cysteine 691/cysteine 705, cysteine 693/cysteine 712, cysteine 714/cysteine 723, cysteine 726/cysteine 741, cysteine 744/cysteine 756, cysteine 746/cysteine 763, cysteine 765/cysteine 774, cysteine 777/cysteine 789, cysteine 792/cysteine 805, cysteine 794/cysteine 812, cysteine 814/cysteine 823, and cysteine 826/cysteine 846. Laminin EGF-like domains are found at residues 515 to 571 (CQCH…NCKP), 572 to 637 (CQCH…ACKL), 638 to 690 (CDCN…GCRP), 691 to 743 (CNCN…GCEP), 744 to 791 (CQCN…ACEV), 792 to 848 (CDCS…NCEK), 853 to 896 (NGSL…GCQA), 897 to 947 (CDCD…GCLP), 948 to 998 (CLCH…RCRP), and 999 to 1049 (CHCH…GCSK). Asparagine 647 is a glycosylation site (N-linked (GlcNAc...) asparagine). Asparagine 836 and asparagine 853 each carry an N-linked (GlcNAc...) asparagine glycan. 14 disulfides stabilise this stretch: cysteine 867-cysteine 876, cysteine 879-cysteine 894, cysteine 897-cysteine 910, cysteine 899-cysteine 917, cysteine 919-cysteine 928, cysteine 931-cysteine 945, cysteine 948-cysteine 960, cysteine 950-cysteine 967, cysteine 969-cysteine 979, cysteine 982-cysteine 996, cysteine 999-cysteine 1011, cysteine 1001-cysteine 1018, cysteine 1020-cysteine 1029, and cysteine 1032-cysteine 1047. An N-linked (GlcNAc...) asparagine glycan is attached at asparagine 885. Asparagine 941 carries an N-linked (GlcNAc...) asparagine glycan. Asparagine 1008 carries N-linked (GlcNAc...) asparagine glycosylation. 5 Fibronectin type-III domains span residues 1055–1143 (PPPR…TKPE), 1147–1241 (GHLN…APPQ), 1242–1357 (TQGP…SVPV), 1358–1462 (FMAP…AAPA), and 1463–1566 (QLRP…LQLK). N-linked (GlcNAc...) asparagine glycosylation is found at asparagine 1068, asparagine 1089, asparagine 1150, asparagine 1171, and asparagine 1222. N-linked (GlcNAc...) asparagine glycosylation is found at asparagine 1382, asparagine 1473, and asparagine 1626. 2 Laminin G-like domains span residues 1511 to 1700 (TKGT…WEGC) and 1705 to 1882 (EEGV…QDGC). A disulfide bridge links cysteine 1663 with cysteine 1700. Residue asparagine 1770 is glycosylated (N-linked (GlcNAc...) asparagine). 13 Fibronectin type-III domains span residues 1847–1946 (EPGF…TAPQ), 1948–2045 (VPTP…TPQE), 2046–2132 (APQE…TAQL), 2133–2234 (PPEQ…IPEG), 2235–2321 (VPAP…APPE), 2322–2421 (GVVN…SVEM), 2422–2525 (PPGA…DKPG), 2526–2613 (PIDA…TLPG), 2617–2713 (GIPS…TRPC), 2717–2810 (GVQP…THPA), 2811–2914 (PPQE…TLAG), 2918–3009 (RGAT…MWEE), and 3013–3103 (GMLP…TPSD). The cysteines at positions 1853 and 1882 are disulfide-linked. Asparagine 1894 carries an N-linked (GlcNAc...) asparagine glycan. Positions 1931–1955 (VSSDWSRGRTLGTAPQSVPTPSRAQ) are disordered. Positions 1943–1955 (TAPQSVPTPSRAQ) are enriched in polar residues. N-linked (GlcNAc...) asparagine glycans are attached at residues asparagine 1958, asparagine 2095, asparagine 2121, asparagine 2177, asparagine 2186, asparagine 2249, asparagine 2276, asparagine 2313, asparagine 2368, and asparagine 2404. 5 N-linked (GlcNAc...) asparagine glycosylation sites follow: asparagine 2575, asparagine 2647, asparagine 2701, asparagine 2761, and asparagine 2779. Residues asparagine 2928, asparagine 2998, asparagine 3023, asparagine 3090, asparagine 3208, asparagine 3322, and asparagine 3411 are each glycosylated (N-linked (GlcNAc...) asparagine). Fibronectin type-III domains follow at residues 3395–3489 (CPAT…TRED), 3490–3580 (VPEG…TTQR), 3581–3671 (SPEN…TLQA), 3672–3766 (APQG…TPED), 3769–3857 (PPCN…TLEA), 3858–3955 (APVG…TLEA), 3956–4059 (PPRG…SAPS), 4060–4148 (GLMN…APPD), 4149–4256 (TQMA…APPD), 4257–4346 (GLSP…TPEV), 4347–4437 (PPSE…APPE), 4438–4522 (NMDP…TSPS), 4523–4625 (APSG…VPPL), 4628–4725 (PAPH…TGPA), 4726–4818 (PPEG…THPA), 4819–4921 (PPSG…TKKE), and 4922–5005 (MPQY…YDAA). Asparagine 3589, asparagine 3645, asparagine 3686, asparagine 3712, asparagine 3723, and asparagine 3772 each carry an N-linked (GlcNAc...) asparagine glycan. Residues asparagine 3976, asparagine 4063, asparagine 4194, asparagine 4218, asparagine 4304, asparagine 4340, asparagine 4365, and asparagine 4410 are each glycosylated (N-linked (GlcNAc...) asparagine). 9 N-linked (GlcNAc...) asparagine glycosylation sites follow: asparagine 4556, asparagine 4575, asparagine 4683, asparagine 4716, asparagine 4746, asparagine 4756, asparagine 4765, asparagine 4915, and asparagine 4934. Residues 5034–5054 (FIMVMAVVGLILLAIFLSLIL) form a helical membrane-spanning segment. The Cytoplasmic segment spans residues 5055-5193 (QRKIHKEPCI…EHTAFTDTHL (139 aa)). The PDZ-binding motif lies at 5191–5193 (THL).

As to quaternary structure, interacts with collagen IV and fibronectin via its laminin EGF-like domains. Interaction with collagen may be required for stable integration into the basement membrane. Interacts with NINL. Interacts with USH1C. Component of USH2 complex, composed of ADGRV1, PDZD7, USH2A and WHRN. Interacts with ADGRV1/MASS1 (via N-terminal PDZ domain). Interacts (via the cytoplasmic region) with WHRN. Interacts (via the cytoplasmic region) with PDZD7. Interacts (via the cytoplasmic region) with VEZT and MYO7A (via MyTH4-FERM domains); the interaction associates VEZT with the USH2 complex at the stereocilia base. In terms of tissue distribution, present in the testis, epididymis, oviduct, spleen, submaxillary gland, and small and large intestines. Not detected in the brain, skin, lung, skeletal muscle, cardiac muscle, liver or kidney. Expressed in smooth muscle of the colon and the epididymis. Also present in select vascular basement membranes. In the cochlea, it is present in virtually every basement membrane. It is particularly high in the strial capillary basement membranes (SCBMs). In the retina, it is again expressed in all of the basement membranes. It is also very prevalent in the lens capsule and the Bruch's layer between the retinal pigment epithelium and the choroid layer, which is very rich in basement membranes. In neonates in it is widely expressed in the basement membranes of the cochlea. Present in the synaptic terminals of retinal photoreceptors (at protein level).

Its subcellular location is the cell projection. It is found in the stereocilium membrane. It localises to the photoreceptor inner segment. The protein resides in the secreted. Functionally, involved in hearing and vision as member of the USH2 complex. In the inner ear, required for the maintenance of hair bundle ankle formation, which connects growing stereocilia in developing cochlear hair cells. In retina photoreceptors, the USH2 complex is required for the maintenance of periciliary membrane complex that seems to play a role in regulating intracellular protein transport. The chain is Usherin (Ush2A) from Mus musculus (Mouse).